The chain runs to 153 residues: Ribosome maturation factor RimP (153 aa).

It belongs to the RimP family.

Its subcellular location is the cytoplasm. In terms of biological role, required for maturation of 30S ribosomal subunits. The chain is Ribosome maturation factor RimP from Coxiella burnetii (strain RSA 331 / Henzerling II).